Here is a 407-residue protein sequence, read N- to C-terminus: Wilms tumor protein homolog B (407 aa).

Glycyl lysine isopeptide (Lys-Gly) (interchain with G-Cter in SUMO) cross-links involve residues Lys55 and Lys158. Positions 213-221 match the 9aaTAD motif; sequence MTWNQMNLG. 4 C2H2-type zinc fingers span residues 284–308, 314–338, 344–366, and 372–396; these read FMCA…SRKH, YQCD…QRRH, FQCK…TRTH, and FSCR…HNMH. Important for interaction with target DNA regions lie at residues 328-342 and 354-362; these read SDQL…TGVK and SRSDHLKTH.

Belongs to the EGR C2H2-type zinc-finger protein family. Expressed in the pronephric anlage from stage 23 to 30. Also expressed in the adult kidney (mesonephros) and in testis.

It is found in the nucleus. The protein localises to the cytoplasm. The protein resides in the nucleus speckle. Functionally, transcription factor required for development of the vascular component of the pronephric kidney, the glomus; may repress tubule-specific gene expression in the portion of the pronephros fated to form the glomus. Recognizes and binds to the DNA sequence 5'-GCG(T/G)GGGCG-3'. Inhibits Wnt-signaling during embryonic development. In Xenopus laevis (African clawed frog), this protein is Wilms tumor protein homolog B (wt1-b).